We begin with the raw amino-acid sequence, 168 residues long: Outer-membrane lipoprotein YfiB (168 aa).

Residues 1–25 (MLPQRLHPSRLLALALFSLVLGLAG) form the signal peptide. The N-palmitoyl cysteine moiety is linked to residue C26. A lipid anchor (S-diacylglycerol cysteine) is attached at C26. Positions 53-168 (EGWEFGMSSK…RRVAIIVPAE (116 aa)) constitute an OmpA-like domain.

Belongs to the outer membrane OOP (TC 1.B.6) superfamily. As to quaternary structure, homodimer. Interacts with YfiR. The YfiB-YfiR complex is a 2:2 heterotetramer.

It is found in the cell outer membrane. Both lipid anchor in the outer membrane and peptidoglycan binding are required for full activity. Once activated by certain cell stress, the dimeric YfiB transforms from a compact conformation to a stretched conformation, allowing the periplasmic domain of the membrane-anchored YfiB to penetrate the cell wall and sequester the YfiR dimer. GMP enhances the binding affinity between YfiB and YfiR. Activates the diguanylate cyclase TpbB/YfiN by sequestering YfiR at the outer membrane, which counteracts the YfiR-mediated repression of TpbB/YfiN at the inner membrane and leads to increased c-di-GMP production. May act as a sensor of envelope stress. Its function is as follows. Part of the YfiB-TpbB-YfiR (or yfiBNR) system, encoding a tripartite signaling module that modulates intracellular c-di-GMP levels. The system is a key regulator of the small colony variant (SCV) phenotype, and plays an important role in biofilm formation and in vivo persistence. The c-di-GMP produced by TpbB/YfiN stimulates the production of the Pel and Psl exopolysaccharides, which promotes surface attachment, generates an SCV phenotype and confers resistance against phagocytosis. In Pseudomonas aeruginosa (strain ATCC 15692 / DSM 22644 / CIP 104116 / JCM 14847 / LMG 12228 / 1C / PRS 101 / PAO1), this protein is Outer-membrane lipoprotein YfiB.